The sequence spans 242 residues: Small ribosomal subunit protein uS2 (242 aa).

Belongs to the universal ribosomal protein uS2 family.

The protein is Small ribosomal subunit protein uS2 of Shewanella piezotolerans (strain WP3 / JCM 13877).